Reading from the N-terminus, the 142-residue chain is Large ribosomal subunit protein uL11 (142 aa).

Belongs to the universal ribosomal protein uL11 family. In terms of assembly, part of the ribosomal stalk of the 50S ribosomal subunit. Interacts with L10 and the large rRNA to form the base of the stalk. L10 forms an elongated spine to which L12 dimers bind in a sequential fashion forming a multimeric L10(L12)X complex. Post-translationally, one or more lysine residues are methylated.

Functionally, forms part of the ribosomal stalk which helps the ribosome interact with GTP-bound translation factors. The polypeptide is Large ribosomal subunit protein uL11 (Serratia marcescens).